The following is a 617-amino-acid chain: Zinc finger protein 221 (617 aa).

One can recognise a KRAB domain in the interval 30 to 100; that stretch reads VTFKDVAVVF…KTTSQREGNS (71 aa). 3 C2H2-type zinc fingers span residues 170 to 192, 198 to 220, and 226 to 248; these read YRCN…QQSH, HTCG…QRVH, and YKCD…QRVH. The C2H2-type 4; degenerate zinc finger occupies 254 to 276; it reads FKCGQCGKGFHSRSALNVHCKLH. 11 consecutive C2H2-type zinc fingers follow at residues 282-304, 310-332, 338-360, 366-388, 394-416, 422-444, 450-472, 478-500, 506-528, 534-556, and 562-584; these read YNCE…QRIH, FKCD…SMVH, FRCD…SMVH, YKCE…QMVH, YNCK…QQVH, FKCE…QRSH, YNCE…QRVH, YNCK…QRLH, FKCE…QTCH, and YKCE…QRVH.

Belongs to the krueppel C2H2-type zinc-finger protein family.

The protein localises to the nucleus. May be involved in transcriptional regulation. This Homo sapiens (Human) protein is Zinc finger protein 221 (ZNF221).